A 178-amino-acid chain; its full sequence is MKKFSAIFGLLSVIFVIMAISQVSGLSGAITPPKIDIMVNASNGLPQDINSIIYVKNPNSFPVKVEMVTTGDLNNSKKVEVKIMKNNFTLKPGETVGVNITFTVKEKDNYEGDILTKISPVDYGDDKKGVNLKASVVLPTKVAIMVVGNEIHTKELVITAVLIISILGLGAMLIRRHL.

Transmembrane regions (helical) follow at residues 6 to 26 (AIFG…VSGL) and 154 to 174 (KELV…AMLI).

It localises to the cell membrane. This is an uncharacterized protein from Methanocaldococcus jannaschii (strain ATCC 43067 / DSM 2661 / JAL-1 / JCM 10045 / NBRC 100440) (Methanococcus jannaschii).